The primary structure comprises 177 residues: ATP synthase subunit delta (177 aa).

It belongs to the ATPase delta chain family. As to quaternary structure, F-type ATPases have 2 components, F(1) - the catalytic core - and F(0) - the membrane proton channel. F(1) has five subunits: alpha(3), beta(3), gamma(1), delta(1), epsilon(1). F(0) has three main subunits: a(1), b(2) and c(10-14). The alpha and beta chains form an alternating ring which encloses part of the gamma chain. F(1) is attached to F(0) by a central stalk formed by the gamma and epsilon chains, while a peripheral stalk is formed by the delta and b chains.

Its subcellular location is the cell inner membrane. Its function is as follows. F(1)F(0) ATP synthase produces ATP from ADP in the presence of a proton or sodium gradient. F-type ATPases consist of two structural domains, F(1) containing the extramembraneous catalytic core and F(0) containing the membrane proton channel, linked together by a central stalk and a peripheral stalk. During catalysis, ATP synthesis in the catalytic domain of F(1) is coupled via a rotary mechanism of the central stalk subunits to proton translocation. In terms of biological role, this protein is part of the stalk that links CF(0) to CF(1). It either transmits conformational changes from CF(0) to CF(1) or is implicated in proton conduction. This Shewanella frigidimarina (strain NCIMB 400) protein is ATP synthase subunit delta.